The sequence spans 152 residues: Ribonuclease H (152 aa).

The RNase H type-1 domain maps to Met1 to Glu142. 4 residues coordinate Mg(2+): Asp10, Glu48, Asp70, and Asp134.

It belongs to the RNase H family. Monomer. Mg(2+) is required as a cofactor.

It is found in the cytoplasm. The enzyme catalyses Endonucleolytic cleavage to 5'-phosphomonoester.. In terms of biological role, endonuclease that specifically degrades the RNA of RNA-DNA hybrids. The sequence is that of Ribonuclease H from Rickettsia massiliae (strain Mtu5).